The sequence spans 80 residues: Histone H1.M6.1 (80 aa).

Residues 1–80 (MSDAAVPPKK…KAVKKAPKKK (80 aa)) form a disordered region. The segment covering 11–80 (ASPKKAAAKK…KAVKKAPKKK (70 aa)) has biased composition (basic residues).

It is found in the nucleus. It localises to the chromosome. The chain is Histone H1.M6.1 from Trypanosoma cruzi.